Reading from the N-terminus, the 281-residue chain is Putative phosphatase/phosphodiesterase MG246 (281 aa).

Positions 11, 42, 43, and 70 each coordinate Fe cation. His71 serves as the catalytic Proton donor. Fe cation-binding residues include His157, His182, and His184.

It belongs to the YmdB-like family. The cofactor is Fe(3+).

The chain is Putative phosphatase/phosphodiesterase MG246 from Mycoplasma genitalium (strain ATCC 33530 / DSM 19775 / NCTC 10195 / G37) (Mycoplasmoides genitalium).